Reading from the N-terminus, the 199-residue chain is Holliday junction branch migration complex subunit RuvA (199 aa).

The interval 1-64 is domain I; sequence MIAKLTGRLD…EDFLRLLGFA (64 aa). The interval 65–143 is domain II; that stretch reads RAEERDWFRL…ALGGISGSGP (79 aa). The interval 144–146 is flexible linker; the sequence is ALS. The segment at 147–199 is domain III; it reads AAAGPVGDAIAALTGLGFKPGEASAAVAAANEELGADASLDALVRVALKKAAK.

This sequence belongs to the RuvA family. As to quaternary structure, homotetramer. Forms an RuvA(8)-RuvB(12)-Holliday junction (HJ) complex. HJ DNA is sandwiched between 2 RuvA tetramers; dsDNA enters through RuvA and exits via RuvB. An RuvB hexamer assembles on each DNA strand where it exits the tetramer. Each RuvB hexamer is contacted by two RuvA subunits (via domain III) on 2 adjacent RuvB subunits; this complex drives branch migration. In the full resolvosome a probable DNA-RuvA(4)-RuvB(12)-RuvC(2) complex forms which resolves the HJ.

It localises to the cytoplasm. The RuvA-RuvB-RuvC complex processes Holliday junction (HJ) DNA during genetic recombination and DNA repair, while the RuvA-RuvB complex plays an important role in the rescue of blocked DNA replication forks via replication fork reversal (RFR). RuvA specifically binds to HJ cruciform DNA, conferring on it an open structure. The RuvB hexamer acts as an ATP-dependent pump, pulling dsDNA into and through the RuvAB complex. HJ branch migration allows RuvC to scan DNA until it finds its consensus sequence, where it cleaves and resolves the cruciform DNA. In Sphingopyxis alaskensis (strain DSM 13593 / LMG 18877 / RB2256) (Sphingomonas alaskensis), this protein is Holliday junction branch migration complex subunit RuvA.